The chain runs to 155 residues: Small ribosomal subunit protein uS7 (155 aa).

It belongs to the universal ribosomal protein uS7 family. In terms of assembly, part of the 30S ribosomal subunit. Contacts proteins S9 and S11.

In terms of biological role, one of the primary rRNA binding proteins, it binds directly to 16S rRNA where it nucleates assembly of the head domain of the 30S subunit. Is located at the subunit interface close to the decoding center, probably blocks exit of the E-site tRNA. This Helicobacter hepaticus (strain ATCC 51449 / 3B1) protein is Small ribosomal subunit protein uS7.